The chain runs to 467 residues: Prenyltransferase GME11375 (467 aa).

Residue E93 coordinates L-tryptophan. Residues R108, K196, Y198, K266, Y268, and Y436 each coordinate dimethylallyl diphosphate.

Belongs to the tryptophan dimethylallyltransferase family.

Its pathway is secondary metabolite biosynthesis. Functionally, prenyltransferase; part of the gene cluster that mediates the biosynthesis of dibenzodioxocinones such as pestalotiollide B, a novel class of inhibitors against cholesterol ester transfer protein (CEPT). The biosynthesis initiates from condensation of acetate and malonate units catalyzed by the non-reducing PKS pks8/GME11356. Pks8/GME11356 lacks a thioesterase (TE) domain, which is important to the cyclizing of the third ring of atrochrysone carboxylic acid, and the esterase GME11355 might play the role of TE and catalyzes the cyclization reaction of the C ring. The lactamase-like protein GME11357 (or other beta-lactamases in Pestalotiopsis microspora) probably hydrolyzes the thioester bond between the ACP of pks8/GME11356 and the intermediate to release atrochrysone carboxylic acid, which is spontaneously dehydrates to form endocrocin anthrone. Endocrocin anthrone is further converted to emodin via the endocrocin intermediate. Emodin is then oxidized by several enzymes such as the Baeyer-Villiger oxidase GME11358, the oxidoreductase GME11367, the short chain dehydrogenase/reductase GME11373, as well as by other oxidoreductases from the cluster, to modify the A and C rings and open the B ring, and finally yield monodictyphenone. The prenyltransferase GME11375 may catalyze the addition reaction between the C5 side chains and the carbon bone of dibenzodioxocinones. The remaining biochemical reactions to the final product dibenzodioxocinones should be methylation catalyzed by methyltransferase GME11366 and reduction and lactonization reaction catalyzed by a series of oxidordeuctases. This is Prenyltransferase GME11375 from Pestalotiopsis microspora.